A 456-amino-acid polypeptide reads, in one-letter code: Bifunctional protein GlmU (456 aa).

Positions 1-229 (MLNNAMSVVI…LSEVEGVNNR (229 aa)) are pyrophosphorylase. UDP-N-acetyl-alpha-D-glucosamine is bound by residues 11 to 14 (LAAG), Lys25, Gln76, 81 to 82 (GT), 103 to 105 (YGD), Gly140, Glu154, Asn169, and Asn227. Residue Asp105 coordinates Mg(2+). Residue Asn227 coordinates Mg(2+). The interval 230–250 (LQLSRLERVYQSEQAEKLLLA) is linker. Residues 251–456 (GVMLRDPARF…EGWRRPVKKK (206 aa)) are N-acetyltransferase. Residues Arg333 and Lys351 each contribute to the UDP-N-acetyl-alpha-D-glucosamine site. The active-site Proton acceptor is the His363. UDP-N-acetyl-alpha-D-glucosamine contacts are provided by Tyr366 and Asn377. Acetyl-CoA is bound by residues Ala380, 386 to 387 (NY), Ser405, Ala423, and Arg440.

This sequence in the N-terminal section; belongs to the N-acetylglucosamine-1-phosphate uridyltransferase family. It in the C-terminal section; belongs to the transferase hexapeptide repeat family. Homotrimer. Mg(2+) serves as cofactor.

Its subcellular location is the cytoplasm. It catalyses the reaction alpha-D-glucosamine 1-phosphate + acetyl-CoA = N-acetyl-alpha-D-glucosamine 1-phosphate + CoA + H(+). It carries out the reaction N-acetyl-alpha-D-glucosamine 1-phosphate + UTP + H(+) = UDP-N-acetyl-alpha-D-glucosamine + diphosphate. The protein operates within nucleotide-sugar biosynthesis; UDP-N-acetyl-alpha-D-glucosamine biosynthesis; N-acetyl-alpha-D-glucosamine 1-phosphate from alpha-D-glucosamine 6-phosphate (route II): step 2/2. It functions in the pathway nucleotide-sugar biosynthesis; UDP-N-acetyl-alpha-D-glucosamine biosynthesis; UDP-N-acetyl-alpha-D-glucosamine from N-acetyl-alpha-D-glucosamine 1-phosphate: step 1/1. It participates in bacterial outer membrane biogenesis; LPS lipid A biosynthesis. In terms of biological role, catalyzes the last two sequential reactions in the de novo biosynthetic pathway for UDP-N-acetylglucosamine (UDP-GlcNAc). The C-terminal domain catalyzes the transfer of acetyl group from acetyl coenzyme A to glucosamine-1-phosphate (GlcN-1-P) to produce N-acetylglucosamine-1-phosphate (GlcNAc-1-P), which is converted into UDP-GlcNAc by the transfer of uridine 5-monophosphate (from uridine 5-triphosphate), a reaction catalyzed by the N-terminal domain. This Escherichia fergusonii (strain ATCC 35469 / DSM 13698 / CCUG 18766 / IAM 14443 / JCM 21226 / LMG 7866 / NBRC 102419 / NCTC 12128 / CDC 0568-73) protein is Bifunctional protein GlmU.